Reading from the N-terminus, the 284-residue chain is tRNA-cytidine(32) 2-sulfurtransferase (284 aa).

The PP-loop motif signature appears at 45 to 50 (SGGKDS). Residues cysteine 120, cysteine 123, and cysteine 211 each contribute to the [4Fe-4S] cluster site.

It belongs to the TtcA family. Homodimer. Requires Mg(2+) as cofactor. [4Fe-4S] cluster is required as a cofactor.

The protein localises to the cytoplasm. The catalysed reaction is cytidine(32) in tRNA + S-sulfanyl-L-cysteinyl-[cysteine desulfurase] + AH2 + ATP = 2-thiocytidine(32) in tRNA + L-cysteinyl-[cysteine desulfurase] + A + AMP + diphosphate + H(+). It participates in tRNA modification. Its function is as follows. Catalyzes the ATP-dependent 2-thiolation of cytidine in position 32 of tRNA, to form 2-thiocytidine (s(2)C32). The sulfur atoms are provided by the cysteine/cysteine desulfurase (IscS) system. This is tRNA-cytidine(32) 2-sulfurtransferase from Alcanivorax borkumensis (strain ATCC 700651 / DSM 11573 / NCIMB 13689 / SK2).